A 270-amino-acid chain; its full sequence is MLRQLLLAALCLAGPPAPARACQLPSEWRPLSEGCRAELAETIVYARVLALHPEAPGLYNHLPWQYHAGQGGLFYSAEVEMLCDQAWGSMLEVPAGSRLNLTGLGYFSCHSHTVVQDYSYFFFLRMDENYNLLPHGVNFQDAIFPDTQENRRMFSSLFQFSNCSQGQQLATFSSDWEIQEDSRLMCSSVQKALFEEEDHVKKLQQKVATLEKRNRQLRERVKKVKRSLRQARKKGRHLELANQKLSEKLAAGALPHINARGPVRPPYLRG.

Residues 1–21 form the signal peptide; it reads MLRQLLLAALCLAGPPAPARA. Asparagine 100 carries an N-linked (GlcNAc...) asparagine glycan. Residues 188–251 adopt a coiled-coil conformation; it reads SVQKALFEEE…NQKLSEKLAA (64 aa).

In terms of assembly, homodimer. Expressed in umbilical vein endothelial cells (HUVEC), and at lower levels in aortic smooth muscle cells (HASMC).

The protein resides in the secreted. Negatively regulates TNF-alpha-induced pro-inflammatory response in endothelial cells (ECs) via inhibition of TNF-alpha-induced NF-kappaB activation in ECs. Positively regulates lipid accumulation in adipose cells. The sequence is that of Coiled-coil domain-containing protein 3 (CCDC3) from Homo sapiens (Human).